The primary structure comprises 41 residues: Large ribosomal subunit protein bL36 (41 aa).

This sequence belongs to the bacterial ribosomal protein bL36 family.

In Rhodopseudomonas palustris (strain BisB18), this protein is Large ribosomal subunit protein bL36.